We begin with the raw amino-acid sequence, 241 residues long: Glucosamine-6-phosphate deaminase (241 aa).

The active-site Proton acceptor; for enolization step is Asp-67. Asn-136 serves as the catalytic For ring-opening step. Residue His-138 is the Proton acceptor; for ring-opening step of the active site. The For ring-opening step role is filled by Glu-143.

This sequence belongs to the glucosamine/galactosamine-6-phosphate isomerase family. NagB subfamily.

It carries out the reaction alpha-D-glucosamine 6-phosphate + H2O = beta-D-fructose 6-phosphate + NH4(+). It participates in amino-sugar metabolism; N-acetylneuraminate degradation; D-fructose 6-phosphate from N-acetylneuraminate: step 5/5. Its function is as follows. Catalyzes the reversible isomerization-deamination of glucosamine 6-phosphate (GlcN6P) to form fructose 6-phosphate (Fru6P) and ammonium ion. The sequence is that of Glucosamine-6-phosphate deaminase from Clostridium acetobutylicum (strain ATCC 824 / DSM 792 / JCM 1419 / IAM 19013 / LMG 5710 / NBRC 13948 / NRRL B-527 / VKM B-1787 / 2291 / W).